A 196-amino-acid polypeptide reads, in one-letter code: uncharacterized protein (196 aa).

CBS domains are found at residues A10–E69 and M76–T132. The ACP-type MB domain occupies I153–R187. C158, C161, C177, and C180 together coordinate Fe cation. Residues C158, C161, C177, and C180 each coordinate Zn(2+).

This is an uncharacterized protein from Methanopyrus kandleri (strain AV19 / DSM 6324 / JCM 9639 / NBRC 100938).